Reading from the N-terminus, the 136-residue chain is Small ribosomal subunit protein uS9 (136 aa).

Belongs to the universal ribosomal protein uS9 family.

This Borrelia hermsii (strain HS1 / DAH) protein is Small ribosomal subunit protein uS9.